The sequence spans 223 residues: Ribosome maturation factor RimM (223 aa).

A compositionally biased stretch (low complexity) spans 1–12 (MARRPGSSSRGP). Disordered stretches follow at residues 1–44 (MARR…DPGL) and 204–223 (ADPPDDLFAPPGPKPADDPG). The region spanning 136 to 210 (EDEFFLTDLI…KVVADPPDDL (75 aa)) is the PRC barrel domain.

It belongs to the RimM family. As to quaternary structure, binds ribosomal protein uS19.

It localises to the cytoplasm. Functionally, an accessory protein needed during the final step in the assembly of 30S ribosomal subunit, possibly for assembly of the head region. Essential for efficient processing of 16S rRNA. May be needed both before and after RbfA during the maturation of 16S rRNA. It has affinity for free ribosomal 30S subunits but not for 70S ribosomes. This is Ribosome maturation factor RimM from Methylorubrum extorquens (strain PA1) (Methylobacterium extorquens).